The primary structure comprises 62 residues: MAMCEVCGKKVAFGNKVSHSNKKSRRTWKPNVKKIKVLLQNGQRKRIYVCTSCIKAGKVVRA.

It belongs to the bacterial ribosomal protein bL28 family.

This chain is Large ribosomal subunit protein bL28, found in Caldicellulosiruptor bescii (strain ATCC BAA-1888 / DSM 6725 / KCTC 15123 / Z-1320) (Anaerocellum thermophilum).